We begin with the raw amino-acid sequence, 227 residues long: UPF0173 metal-dependent hydrolase SSO0099 (227 aa).

Belongs to the UPF0173 family.

In Saccharolobus solfataricus (strain ATCC 35092 / DSM 1617 / JCM 11322 / P2) (Sulfolobus solfataricus), this protein is UPF0173 metal-dependent hydrolase SSO0099.